Consider the following 931-residue polypeptide: Chitin synthase III (931 aa).

2 N-linked (GlcNAc...) asparagine glycosylation sites follow: asparagine 37 and asparagine 94. The segment at 93–154 (PNASQLPPAG…PGGVGQAGGL (62 aa)) is disordered. Residues 102–122 (GSGGFGDNGFGQYGQPQGFGG) are compositionally biased toward gly residues. N-linked (GlcNAc...) asparagine glycosylation occurs at asparagine 558. The next 5 membrane-spanning stretches (helical) occupy residues 585 to 605 (FFLH…WFSL), 644 to 664 (IINA…FILA), 677 to 697 (IASF…SGYL), 731 to 751 (VILI…FLYL), and 759 to 779 (SFPY…VYAF). N-linked (GlcNAc...) asparagine glycosylation is present at asparagine 802. A run of 2 helical transmembrane segments spans residues 858 to 878 (TGLV…ITSD) and 899 to 919 (FLLY…LWFL).

The protein belongs to the chitin synthase family. Class III subfamily. Highly expressed in conidia and during appressorium formation.

It is found in the cell membrane. The enzyme catalyses [(1-&gt;4)-N-acetyl-beta-D-glucosaminyl](n) + UDP-N-acetyl-alpha-D-glucosamine = [(1-&gt;4)-N-acetyl-beta-D-glucosaminyl](n+1) + UDP + H(+). Polymerizes chitin, a structural polymer of the cell wall and septum, by transferring the sugar moiety of UDP-GlcNAc to the non-reducing end of the growing chitin polymer. Contributes to the production of conidia and the ability of fungal conidia to germinate. Involved in the fungal cell wall integrity and the ability of conidia to withstand biophysical pressure. Required for appressorium formation and evasion of insect cellular and/or humoral defenses, promoting the fungal dimorphic transition to the production of hyphal bodies that occurs within hosts, and ultimately to virulence. The polypeptide is Chitin synthase III (Metarhizium acridum (strain CQMa 102)).